The sequence spans 112 residues: UPF0482 protein Ent638_1930 (112 aa).

Positions 1–27 are cleaved as a signal peptide; sequence MTTLRKRLCLATLLSLTALAFTAPVSA.

It belongs to the UPF0482 family.

The sequence is that of UPF0482 protein Ent638_1930 from Enterobacter sp. (strain 638).